A 1366-amino-acid chain; its full sequence is Collagen alpha-2(I) chain (1366 aa).

The signal sequence occupies residues 1–22; that stretch reads MLSFVDTRTLLLLAVTSCLATC. Q23 bears the Pyrrolidone carboxylic acid mark. Positions 23–79 are cleaved as a propeptide — N-terminal propeptide; it reads QSLQEATARKGPTGDRGPRGERGPPGPPGRDGDDGIPGPPGPPGPPGPPGLGGNFAA. Residues 27 to 1131 are disordered; that stretch reads EATARKGPTG…PRSPPSLRPK (1105 aa). The span at 34 to 44 shows a compositional bias: basic and acidic residues; that stretch reads PTGDRGPRGER. Residues 59 to 71 show a composition bias toward pro residues; it reads PGPPGPPGPPGPP. Position 84 is an allysine (K84). A compositionally biased stretch (gly residues) spans 84–94; sequence KGVGLGPGPMG. Low complexity predominate over residues 95-132; sequence LMGPRGPPGASGAPGPQGFQGPAGEPGEPGQTGPAGAR. Over residues 141 to 155 the composition is skewed to basic and acidic residues; sequence AGEDGHPGKPGRPGE. K177 bears the 5-hydroxylysine; alternate mark. A glycan (O-linked (Gal...) hydroxylysine; alternate) is linked at K177. Composition is skewed to low complexity over residues 225–254, 279–293, 300–321, 330–345, 384–408, 423–434, 470–489, and 513–531; these read VGAP…SAGP, AGPR…VSGP, PGAN…AGAP, PGPV…RGIV, NGEA…RGLP, RGATGPAGVRGP, LPGI…RGEP, and AGLA…NGAQ. Over residues 538–547 the composition is skewed to gly residues; the sequence is GVQGGKGEQG. Residues 594–611 are compositionally biased toward low complexity; sequence PGESGAAGPSGPIGSRGP. The span at 634–643 shows a compositional bias: gly residues; that stretch reads GASGPGGLPG. 2 stretches are compositionally biased toward low complexity: residues 668–690 and 717–737; these read NPGR…AGAT and VGPA…QPGA. The span at 738 to 747 shows a compositional bias: basic and acidic residues; that stretch reads KGERGTKGPK. A compositionally biased stretch (low complexity) spans 756–765; that stretch reads TGPIGSAGPS. Positions 775–784 are enriched in gly residues; it reads GSRGDGGPPG. Composition is skewed to low complexity over residues 785-795, 863-876, 893-932, 951-974, and 981-1001; these read ATGFPGAAGRT, PQGL…LGLP, EPGP…NPGN, PGNI…PTGK, and PGPA…PSGP. Over residues 1005–1016 the composition is skewed to basic and acidic residues; that stretch reads RGDKGEPGEKGP. Over residues 1089-1103 the composition is skewed to pro residues; it reads AGPPGPPGPPGPPGP. Positions 1120–1366 are cleaved as a propeptide — C-terminal propeptide; that stretch reads DQPRSPPSLR…RVDVGPVCFK (247 aa). Positions 1133–1366 constitute a Fibrillar collagen NC1 domain; it reads YEVDATLKSL…RVDVGPVCFK (234 aa). 3 cysteine pairs are disulfide-bonded: C1163/C1195, C1203/C1364, and C1272/C1317. Residues D1181, N1183, Q1184, C1186, and D1189 each contribute to the Ca(2+) site.

This sequence belongs to the fibrillar collagen family. As to quaternary structure, trimers of one alpha 2(I) and two alpha 1(I) chains. Interacts (via C-terminus) with TMEM131 (via PapD-L domain); the interaction is direct and is involved in assembly and TRAPPIII ER-to-Golgi transport complex-dependent secretion of collagen. In terms of processing, prolines at the third position of the tripeptide repeating unit (G-X-Y) are hydroxylated in some or all of the chains. In terms of tissue distribution, forms the fibrils of tendon, ligaments and bones. In bones the fibrils are mineralized with calcium hydroxyapatite.

It localises to the secreted. It is found in the extracellular space. The protein resides in the extracellular matrix. Its function is as follows. Type I collagen is a member of group I collagen (fibrillar forming collagen). This is Collagen alpha-2(I) chain (COL1A2) from Canis lupus familiaris (Dog).